We begin with the raw amino-acid sequence, 315 residues long: L-lactate dehydrogenase (315 aa).

NAD(+) is bound by residues V14, D35, Y67, and 81 to 82; that span reads GV. Substrate contacts are provided by residues Q84, R91, and 123–126; that span reads NPVD. Residues 121–123 and S146 contribute to the NAD(+) site; that span reads ASN. Substrate is bound at residue 151 to 154; that stretch reads DSAR. The active-site Proton acceptor is the H178. Position 219 is a phosphotyrosine (Y219). Substrate is bound at residue T228.

The protein belongs to the LDH/MDH superfamily. LDH family. As to quaternary structure, homotetramer.

The protein resides in the cytoplasm. The enzyme catalyses (S)-lactate + NAD(+) = pyruvate + NADH + H(+). The protein operates within fermentation; pyruvate fermentation to lactate; (S)-lactate from pyruvate: step 1/1. Functionally, catalyzes the conversion of lactate to pyruvate. The chain is L-lactate dehydrogenase from Malacoplasma penetrans (strain HF-2) (Mycoplasma penetrans).